We begin with the raw amino-acid sequence, 242 residues long: Phosphomannomutase 2 (242 aa).

The Nucleophile role is filled by aspartate 8. Mg(2+) contacts are provided by aspartate 8 and aspartate 10. The active-site Proton donor/acceptor is aspartate 10. 4 residues coordinate alpha-D-mannose 1-phosphate: arginine 17, arginine 119, arginine 130, and arginine 137. Lysine 145 carries the N6-acetyllysine modification. Serine 175 and aspartate 177 together coordinate alpha-D-mannose 1-phosphate. Residues aspartate 205, phenylalanine 217, aspartate 219, and threonine 222 each coordinate Mg(2+).

The protein belongs to the eukaryotic PMM family. As to quaternary structure, homodimer.

It localises to the cytoplasm. It carries out the reaction alpha-D-mannose 1-phosphate = D-mannose 6-phosphate. It functions in the pathway nucleotide-sugar biosynthesis; GDP-alpha-D-mannose biosynthesis; alpha-D-mannose 1-phosphate from D-fructose 6-phosphate: step 2/2. Functionally, involved in the synthesis of the GDP-mannose and dolichol-phosphate-mannose required for a number of critical mannosyl transfer reactions. The sequence is that of Phosphomannomutase 2 (Pmm2) from Mus musculus (Mouse).